A 432-amino-acid chain; its full sequence is Adenylosuccinate synthetase (432 aa).

GTP is bound by residues 13-19 (GDEGKGK) and 41-43 (GHT). Asp14 serves as the catalytic Proton acceptor. 2 residues coordinate Mg(2+): Asp14 and Gly41. Residues 14 to 17 (DEGK), 39 to 42 (NAGH), Thr130, Arg144, Gln225, Thr240, and Arg304 contribute to the IMP site. His42 functions as the Proton donor in the catalytic mechanism. Residue 300–306 (AVTGRPR) coordinates substrate. GTP-binding positions include Arg306, 332-334 (KLD), and 415-417 (STG).

This sequence belongs to the adenylosuccinate synthetase family. Homodimer. It depends on Mg(2+) as a cofactor.

It localises to the cytoplasm. The catalysed reaction is IMP + L-aspartate + GTP = N(6)-(1,2-dicarboxyethyl)-AMP + GDP + phosphate + 2 H(+). It participates in purine metabolism; AMP biosynthesis via de novo pathway; AMP from IMP: step 1/2. Its function is as follows. Plays an important role in the de novo pathway of purine nucleotide biosynthesis. Catalyzes the first committed step in the biosynthesis of AMP from IMP. This is Adenylosuccinate synthetase from Actinobacillus succinogenes (strain ATCC 55618 / DSM 22257 / CCUG 43843 / 130Z).